The primary structure comprises 209 residues: Thymidylate kinase (209 aa).

13–20 provides a ligand contact to ATP; it reads GLEGAGKS.

It belongs to the thymidylate kinase family.

The catalysed reaction is dTMP + ATP = dTDP + ADP. Phosphorylation of dTMP to form dTDP in both de novo and salvage pathways of dTTP synthesis. In Shewanella sp. (strain ANA-3), this protein is Thymidylate kinase.